A 109-amino-acid chain; its full sequence is Flagellar hook-basal body complex protein FliE (109 aa).

This sequence belongs to the FliE family.

It is found in the bacterial flagellum basal body. The protein is Flagellar hook-basal body complex protein FliE of Pseudomonas paraeruginosa (strain DSM 24068 / PA7) (Pseudomonas aeruginosa (strain PA7)).